The primary structure comprises 317 residues: Uridylate kinase (317 aa).

Position 9–12 (9–12 (KISG)) interacts with ATP. UMP is bound at residue G49. The ATP site is built by G50 and R54. Residues D69 and 130–137 (TGRPYFTT) each bind UMP. Positions 158, 164, and 167 each coordinate ATP.

This sequence belongs to the UMP kinase family. Homohexamer.

It is found in the cytoplasm. It carries out the reaction UMP + ATP = UDP + ADP. It functions in the pathway pyrimidine metabolism; CTP biosynthesis via de novo pathway; UDP from UMP (UMPK route): step 1/1. Inhibited by UTP. Its function is as follows. Catalyzes the reversible phosphorylation of UMP to UDP. This Malacoplasma penetrans (strain HF-2) (Mycoplasma penetrans) protein is Uridylate kinase.